Reading from the N-terminus, the 775-residue chain is Metal transporter CNNM4 (775 aa).

Topologically, residues 1–178 (MAPVGGGGRP…LLFMVEEPGR (178 aa)) are extracellular. Residues N85 and N122 are each glycosylated (N-linked (GlcNAc...) asparagine). A CNNM transmembrane domain is found at 178-358 (RFLPLWLHIL…EPYNDLVKEE (181 aa)). Residues 179–199 (FLPLWLHILLITVLLVLSGIF) traverse the membrane as a helical segment. The Cytoplasmic segment spans residues 200 to 240 (SGLNLGLMALDPMELRIVQNCGTEKERRYARKIEPIRRKGN). The helical intramembrane region spans 241–261 (YLLCSLLLGNVLVNTSLTILL). Residues 262–264 (DNL) are Cytoplasmic-facing. The helical transmembrane segment at 265–285 (IGSGLMAVASSTIGIVIFGEI) threads the bilayer. Over 286–293 (LPQALCSR) the chain is Extracellular. A helical membrane pass occupies residues 294–316 (HGLAVGANTILLTKFFMLLTFPL). Over 317–775 (SFPISKLLDF…LHKASHENAI (459 aa)) the chain is Cytoplasmic. CBS domains follow at residues 377 to 438 (MTQL…CTPL) and 445 to 511 (YNHP…ILDE). A phosphoserine mark is found at S660, S664, and S770.

Belongs to the ACDP family. As to quaternary structure, interacts with COX11. In terms of tissue distribution, widely expressed. Highly expressed in heart.

The protein resides in the cell membrane. Its function is as follows. Probable metal transporter. The interaction with the metal ion chaperone COX11 suggests that it may play a role in sensory neuron functions. May play a role in biomineralization and retinal function. This is Metal transporter CNNM4 (CNNM4) from Homo sapiens (Human).